Here is an 81-residue protein sequence, read N- to C-terminus: ATP synthase subunit c (81 aa).

The next 2 helical transmembrane spans lie at 7–27 and 57–77; these read AASV…PGLG and LAFM…LLFA.

This sequence belongs to the ATPase C chain family. F-type ATPases have 2 components, F(1) - the catalytic core - and F(0) - the membrane proton channel. F(1) has five subunits: alpha(3), beta(3), gamma(1), delta(1), epsilon(1). F(0) has four main subunits: a(1), b(1), b'(1) and c(10-14). The alpha and beta chains form an alternating ring which encloses part of the gamma chain. F(1) is attached to F(0) by a central stalk formed by the gamma and epsilon chains, while a peripheral stalk is formed by the delta, b and b' chains.

The protein localises to the cellular thylakoid membrane. In terms of biological role, f(1)F(0) ATP synthase produces ATP from ADP in the presence of a proton or sodium gradient. F-type ATPases consist of two structural domains, F(1) containing the extramembraneous catalytic core and F(0) containing the membrane proton channel, linked together by a central stalk and a peripheral stalk. During catalysis, ATP synthesis in the catalytic domain of F(1) is coupled via a rotary mechanism of the central stalk subunits to proton translocation. Its function is as follows. Key component of the F(0) channel; it plays a direct role in translocation across the membrane. A homomeric c-ring of between 10-14 subunits forms the central stalk rotor element with the F(1) delta and epsilon subunits. The chain is ATP synthase subunit c from Synechococcus sp. (strain JA-3-3Ab) (Cyanobacteria bacterium Yellowstone A-Prime).